The following is a 427-amino-acid chain: Glutamate-1-semialdehyde 2,1-aminomutase (427 aa).

At Lys-265 the chain carries N6-(pyridoxal phosphate)lysine.

Belongs to the class-III pyridoxal-phosphate-dependent aminotransferase family. HemL subfamily. As to quaternary structure, homodimer. Pyridoxal 5'-phosphate serves as cofactor.

It localises to the cytoplasm. It carries out the reaction (S)-4-amino-5-oxopentanoate = 5-aminolevulinate. Its pathway is porphyrin-containing compound metabolism; protoporphyrin-IX biosynthesis; 5-aminolevulinate from L-glutamyl-tRNA(Glu): step 2/2. The protein is Glutamate-1-semialdehyde 2,1-aminomutase of Pseudomonas entomophila (strain L48).